Reading from the N-terminus, the 294-residue chain is Nucleotide-binding protein CLB_3433 (294 aa).

Residue 8 to 15 (GLSGAGKT) coordinates ATP. GTP is bound at residue 59-62 (DIRG).

It belongs to the RapZ-like family.

Functionally, displays ATPase and GTPase activities. The polypeptide is Nucleotide-binding protein CLB_3433 (Clostridium botulinum (strain ATCC 19397 / Type A)).